The following is a 450-amino-acid chain: Tubulin alpha-2 chain (450 aa).

GTP is bound by residues Gln11, Glu71, Gly144, Thr145, Thr179, Asn206, and Asn228. A Mg(2+)-binding site is contributed by Glu71. The active site involves Glu254. At Thr349 the chain carries Phosphothreonine. The disordered stretch occupies residues 430–450 (KDYEEVGAEGGDDEDDEGEEY). The segment covering 431–450 (DYEEVGAEGGDDEDDEGEEY) has biased composition (acidic residues).

The protein belongs to the tubulin family. Dimer of alpha and beta chains. A typical microtubule is a hollow water-filled tube with an outer diameter of 25 nm and an inner diameter of 15 nM. Alpha-beta heterodimers associate head-to-tail to form protofilaments running lengthwise along the microtubule wall with the beta-tubulin subunit facing the microtubule plus end conferring a structural polarity. Microtubules usually have 13 protofilaments but different protofilament numbers can be found in some organisms and specialized cells. Requires Mg(2+) as cofactor. Post-translationally, undergoes a tyrosination/detyrosination cycle, the cyclic removal and re-addition of a C-terminal tyrosine residue by the enzymes tubulin tyrosine carboxypeptidase (TTCP) and tubulin tyrosine ligase (TTL), respectively. In terms of processing, acetylation of alpha chains at Lys-40 stabilizes microtubules and affects affinity and processivity of microtubule motors. This modification has a role in multiple cellular functions, ranging from cell motility, cell cycle progression or cell differentiation to intracellular trafficking and signaling.

It is found in the cytoplasm. The protein localises to the cytoskeleton. It carries out the reaction GTP + H2O = GDP + phosphate + H(+). Its function is as follows. Tubulin is the major constituent of microtubules, a cylinder consisting of laterally associated linear protofilaments composed of alpha- and beta-tubulin heterodimers. Microtubules grow by the addition of GTP-tubulin dimers to the microtubule end, where a stabilizing cap forms. Below the cap, tubulin dimers are in GDP-bound state, owing to GTPase activity of alpha-tubulin. This chain is Tubulin alpha-2 chain (TUBA2), found in Arabidopsis thaliana (Mouse-ear cress).